The sequence spans 353 residues: Photosystem II D2 protein (353 aa).

T2 carries the N-acetylthreonine modification. T2 carries the phosphothreonine modification. Residues 41–61 (CAYFALGGWFTGTTFVTSWYT) form a helical membrane-spanning segment. H118 contributes to the chlorophyll a binding site. A helical membrane pass occupies residues 125-141 (GFMLRQFEIARSVNLRP). Pheophytin a contacts are provided by Q130 and N143. The chain crosses the membrane as a helical span at residues 153-166 (VFVSVFLIYPLGQS). Chlorophyll a is bound at residue H198. The helical transmembrane segment at 208 to 228 (AALLCAIHGATVENTLFEDGD) threads the bilayer. Residues H215 and F262 each coordinate a plastoquinone. H215 contacts Fe cation. Residue H269 coordinates Fe cation. A helical transmembrane segment spans residues 279–295 (GLWMSAIGVVGLALNLR).

It belongs to the reaction center PufL/M/PsbA/D family. PSII is composed of 1 copy each of membrane proteins PsbA, PsbB, PsbC, PsbD, PsbE, PsbF, PsbH, PsbI, PsbJ, PsbK, PsbL, PsbM, PsbT, PsbX, PsbY, PsbZ, Psb30/Ycf12, at least 3 peripheral proteins of the oxygen-evolving complex and a large number of cofactors. It forms dimeric complexes. The D1/D2 heterodimer binds P680, chlorophylls that are the primary electron donor of PSII, and subsequent electron acceptors. It shares a non-heme iron and each subunit binds pheophytin, quinone, additional chlorophylls, carotenoids and lipids. There is also a Cl(-1) ion associated with D1 and D2, which is required for oxygen evolution. The PSII complex binds additional chlorophylls, carotenoids and specific lipids. is required as a cofactor.

It localises to the plastid. It is found in the chloroplast thylakoid membrane. It catalyses the reaction 2 a plastoquinone + 4 hnu + 2 H2O = 2 a plastoquinol + O2. Its function is as follows. Photosystem II (PSII) is a light-driven water:plastoquinone oxidoreductase that uses light energy to abstract electrons from H(2)O, generating O(2) and a proton gradient subsequently used for ATP formation. It consists of a core antenna complex that captures photons, and an electron transfer chain that converts photonic excitation into a charge separation. The D1/D2 (PsbA/PsbD) reaction center heterodimer binds P680, the primary electron donor of PSII as well as several subsequent electron acceptors. D2 is needed for assembly of a stable PSII complex. In Tetradesmus obliquus (Green alga), this protein is Photosystem II D2 protein.